We begin with the raw amino-acid sequence, 131 residues long: MKKTKMINSDMSRVIAQMGHFDKLSIGDAGMPVPMGIEKIDLAVDNGIPSFMQVLTNVLEELEVQRIYLAEEIKTENPKMLENIKALMPETPITFMPHSDMKQDLNNCHAFVRTGEMTPYSNIILESGVVF.

Residue H20 is the Proton donor of the active site. Residues D28, H98, and 120-122 (YSN) contribute to the substrate site.

It belongs to the RbsD / FucU family. RbsD subfamily. As to quaternary structure, homodecamer.

It is found in the cytoplasm. The catalysed reaction is beta-D-ribopyranose = beta-D-ribofuranose. Its pathway is carbohydrate metabolism; D-ribose degradation; D-ribose 5-phosphate from beta-D-ribopyranose: step 1/2. Its function is as follows. Catalyzes the interconversion of beta-pyran and beta-furan forms of D-ribose. The chain is D-ribose pyranase from Pediococcus pentosaceus (strain ATCC 25745 / CCUG 21536 / LMG 10740 / 183-1w).